Here is a 471-residue protein sequence, read N- to C-terminus: FERM domain-containing protein 8 (471 aa).

Disordered stretches follow at residues 1–23, 381–416, and 451–471; these read MEGDDGDFPPEPSEHSLSQRGSV, AATGTDGEVTPSHEPTSPETNNKTRERRQGKLRRQN, and TRQAQPPTYSAVQVTESLEQG. The FERM domain maps to 31–382; it reads QDLLVYLAND…ELRSVSESAA (352 aa).

The protein resides in the cytoplasm. It localises to the cytosol. It is found in the cell membrane. Functionally, promotes the cell surface stability of rhomboid 5 homologs and prevents their degradation via the endolysosomal pathway. By acting on rhomboid 5 homologs, involved in ADAM17-mediated ligand shedding. Negatively regulates the Wnt/beta-catenin signaling pathway. The protein is FERM domain-containing protein 8 (frmd8) of Danio rerio (Zebrafish).